The chain runs to 1508 residues: Calponin homology domain-containing protein DDB_G0272472 (1508 aa).

Disordered stretches follow at residues 1–165, 197–290, 309–518, 531–561, 680–706, and 1036–1391; these read MFRN…KNDF, DSEE…NLSP, DFKS…TSIV, AANA…LFND, KEKQ…EKEL, and KIEK…KKSA. Residues 81-107 are compositionally biased toward low complexity; sequence SSSPSTSTTTTTKSSSTTTTTTTSSSS. Residues 208–222 show a composition bias toward basic and acidic residues; sequence PIKKKQSNDLEKNIF. Composition is skewed to low complexity over residues 234–251, 263–290, and 315–332; these read KQST…QKQP, FGDS…NLSP, and SNNT…KSKP. 2 stretches are compositionally biased toward basic and acidic residues: residues 337-346 and 362-371; these read QKEEIKEVST and VDEKPKERST. A compositionally biased stretch (polar residues) spans 380–391; the sequence is KTVTVKSNNSFE. Positions 395-438 are enriched in low complexity; the sequence is FGSTTTNDDGGDNDFSFTPATTPSSSSSTKATTTSPSSTTTTKS. The span at 439-452 shows a compositional bias: polar residues; sequence NINIGQKSNKSVDQ. Residues 455–498 adopt a coiled-coil conformation; the sequence is QFLNDIFQQEEQDKKRREEEAKLKQQQKQKEKEQIKDEIDDLFK. Positions 465-498 are enriched in basic and acidic residues; the sequence is EQDKKRREEEAKLKQQQKQKEKEQIKDEIDDLFK. Composition is skewed to low complexity over residues 500-516 and 531-557; these read SKPT…STTS and AANA…KSTN. Basic and acidic residues predominate over residues 1036 to 1164; the sequence is KIEKEKEERD…DQEEKEKQLK (129 aa). Low complexity-rich tracts occupy residues 1165–1181 and 1189–1206; these read EQQQ…TTTT and DSDA…SSHS. Over residues 1216–1225 the composition is skewed to basic residues; it reads SKAKGRKKPT. Residues 1226 to 1235 are compositionally biased toward basic and acidic residues; the sequence is RRELTKDGNR. The span at 1333–1355 shows a compositional bias: low complexity; it reads PTVTQTTTTTTTPPTTPPSSSVQ. Polar residues predominate over residues 1362-1374; the sequence is RSFSGSSFMGINS. Positions 1397-1504 constitute a Calponin-homology (CH) domain; sequence MKALDVLLQW…YLSEFFKVMK (108 aa).

This Dictyostelium discoideum (Social amoeba) protein is Calponin homology domain-containing protein DDB_G0272472.